We begin with the raw amino-acid sequence, 325 residues long: MNLAFIPSPSTGVIELGPIPLRGYAFCIIIGVFVAVWFGNKRWVARGGKAGTVADVAVWAVPFGLVGGRLYHVITDYQLYFSDGEDWVDAFKIWEGGLGIWGAIAFGAVGAWIACRRRGIPLPAWADALAPGIAIAQAIGRWGNWFNQELYGKPTDLPWALEISEGPNRVAGTYHPTFLYESLWCIGVALLVIWADRRFKLGHGRAFALYVAGYCAGRGWIEYMRVDEAHHILGLRLNVWTAIVVFILAVVYIVISAKIRPGREEIVEPDRDATPAEKDGSGEDGSGEKGVAKADAAAKDPLTKDEPGKDATAENAGAAGAAEKA.

The next 4 helical transmembrane spans lie at 19–39, 47–67, 93–113, and 119–139; these read IPLR…VWFG, GGKA…GLVG, IWEG…GAWI, and GIPL…AQAI. An a 1,2-diacyl-sn-glycero-3-phospho-(1'-sn-glycerol)-binding site is contributed by arginine 141. A run of 3 helical transmembrane segments spans residues 175-195, 207-225, and 237-257; these read HPTF…VIWA, FALY…EYMR, and LNVW…VISA. Basic and acidic residues predominate over residues 266–312; it reads IVEPDRDATPAEKDGSGEDGSGEKGVAKADAAAKDPLTKDEPGKDAT. Residues 266–325 are disordered; the sequence is IVEPDRDATPAEKDGSGEDGSGEKGVAKADAAAKDPLTKDEPGKDATAENAGAAGAAEKA. The segment covering 313–325 has biased composition (low complexity); the sequence is AENAGAAGAAEKA.

It belongs to the Lgt family.

The protein resides in the cell membrane. It catalyses the reaction L-cysteinyl-[prolipoprotein] + a 1,2-diacyl-sn-glycero-3-phospho-(1'-sn-glycerol) = an S-1,2-diacyl-sn-glyceryl-L-cysteinyl-[prolipoprotein] + sn-glycerol 1-phosphate + H(+). It functions in the pathway protein modification; lipoprotein biosynthesis (diacylglyceryl transfer). In terms of biological role, catalyzes the transfer of the diacylglyceryl group from phosphatidylglycerol to the sulfhydryl group of the N-terminal cysteine of a prolipoprotein, the first step in the formation of mature lipoproteins. This Streptomyces griseus subsp. griseus (strain JCM 4626 / CBS 651.72 / NBRC 13350 / KCC S-0626 / ISP 5235) protein is Phosphatidylglycerol--prolipoprotein diacylglyceryl transferase.